A 100-amino-acid chain; its full sequence is Defensin-6 (100 aa).

The N-terminal stretch at 1–19 is a signal peptide; that stretch reads MRTLTILTAVLLVALQAKA. Residues 20–68 constitute a propeptide that is removed on maturation; sequence EPLQAEDEPLQAKAYEADAQEQRGANDQDFAVSFAEDASSSLRALGSTR. Intrachain disulfides connect Cys72-Cys99, Cys74-Cys88, and Cys78-Cys98.

It belongs to the alpha-defensin family. As to quaternary structure, homodimer. Self-assembles into higher-order oligomers termed nanonets, fibril-like structures that entrap microbes. Self-assembly into nanonets seems to protect against proteolytic digestion in duodenal fluid. Interacts with Y.enterocolitica invasin and S.typhimurium fliC/flagellim; the interaction creates an anchoring site for progressive DEFA6 self-assembly into nanonets. Proteolytically cleaved by trypsin at Arg-68; the propeptide is stored in the tissue of the small intestine and the mature peptide is found in the luminal fluid; cleavage may occur during or after release into the lumen. The N-terminal propeptide region suppresses self-assembly and renders DEFA6 propeptide unable to agglutinate bacteria and protect human epithelial cells from bacterial invasion. Post-translationally, under reducing conditions, naturally present in the gut owing to the low redox potential or enzymatically generated by the thioredoxin system, the disulfide bridges are opened leading to a conformational change of DEF6, thereby changing its antimicrobial spectrum. The reduced form exhibits inhibitory activity against anaerobic bacteria, in contrast to the minimal antimicrobial activity of the disulfide-linked oxidized form. The formation of higher-order nanonets and bacterial entrapment is independent of the redox state.

Its subcellular location is the secreted. The protein localises to the cytoplasmic vesicle. It is found in the secretory vesicle. Host-defense peptide that contributes to intestinal innate immunity and mediates homeostasis at mucosal surfaces by forming higher-order oligomers that capture bacteria and prevent microbial invasion of the epithelium. After binding to bacterial surface proteins, undergoes ordered self-assembly to form fibril-like nanonets that surround and entangle bacteria and thereby prevent bacterial invasion across the epithelial barrier. Entangles and agglutinates Gram-negative bacteria, such as E.coli, S.typhimurium and Y.enterocolitica, and Gram-positive bacteria such as L.monocytogenes, thereby protecting the intestine against invasion by enteric bacterial pathogens. Blocks adhesion of C.albicans to intestinal epithelial cells and thereby suppresses fungal invasion of epithelial cells and biofilm formation. Under reducing conditions and in an acidic environment similar to the intestinal milieu, exhibits inhibitory activity against anaerobic bacteria such as B.adolescentis, L.acidophilus, and B.breve, as well as B.longum and S.thermophilus, possibly by leading to alterations in bacterial cell envelope structures. The disulfide-linked oxidized form exhibits negligible antimicrobial activity against Gram-negative and Gram-positive bacteria, as compared to the enteric defensin DEFA5. This Pan troglodytes (Chimpanzee) protein is Defensin-6 (DEFA6).